The primary structure comprises 438 residues: MKLWGGRFKGEENKLMEDFNSSLSFDKRLYKEDILGSKAHVKMLGNCNILKDYEVEEIIKGLDSILKDIEDDKLKIQGEYEDIHSFIESNLIQRIGDVGKKLHTARSRNDQVAVDFKLYAKNISLKIIESIETLQNTIKNLAEKNNVIMPGYTHLQRAQVVTFKHHIMAYYNMLKRDKKRIENSIENMDESPLGCCALAGTTYETDRKFTAKKLGFRKEVDNFLDGVSDRDFVIEFISDFSIIMMHLSRLSEELILWSSKEFDFIEISDEFSTGSSIMPQKKNPDAAELIRGKTGRVYGDLIAILTVMKGIPLAYNKDMQEDKESFFDASDTVLSCIKVMEGMLSSLKVKKGNTLRAVKMGFLNATESADYLVLKGVPFRDAHKIIGEIVLYCEEKDKSIEELNINELKKFSTFFNEDIYEFIDYENALNRGIKKEIK.

Belongs to the lyase 1 family. Argininosuccinate lyase subfamily.

It localises to the cytoplasm. It carries out the reaction 2-(N(omega)-L-arginino)succinate = fumarate + L-arginine. It participates in amino-acid biosynthesis; L-arginine biosynthesis; L-arginine from L-ornithine and carbamoyl phosphate: step 3/3. The polypeptide is Argininosuccinate lyase (Clostridium tetani (strain Massachusetts / E88)).